Consider the following 80-residue polypeptide: UPF0154 protein SH1564 (80 aa).

The helical transmembrane segment at 4–24 (WLAILLIIVALIGGLVGGFFL) threads the bilayer.

It belongs to the UPF0154 family.

The protein localises to the membrane. The polypeptide is UPF0154 protein SH1564 (Staphylococcus haemolyticus (strain JCSC1435)).